Reading from the N-terminus, the 162-residue chain is Large ribosomal subunit protein uL10 (162 aa).

This sequence belongs to the universal ribosomal protein uL10 family. Part of the ribosomal stalk of the 50S ribosomal subunit. The N-terminus interacts with L11 and the large rRNA to form the base of the stalk. The C-terminus forms an elongated spine to which L12 dimers bind in a sequential fashion forming a multimeric L10(L12)X complex.

Functionally, forms part of the ribosomal stalk, playing a central role in the interaction of the ribosome with GTP-bound translation factors. This chain is Large ribosomal subunit protein uL10, found in Borrelia duttonii (strain Ly).